The chain runs to 329 residues: Ankyrin repeat and SOCS box protein 5 (329 aa).

ANK repeat units lie at residues 69 to 98 (ADRSPLHEAASQGRLLALRTLLSQGYNVNA), 102 to 131 (DHITPLHEACLGDHVACARTLLEAGANVNA), 135 to 164 (DGVTPLFNACSQGSTSCTELLLEYGAKAQL), 167 to 196 (CLPSPTHEAASKGHHEFLDLLISWGIDVDQ), 200 to 229 (HLGTPLYVACMSQQFHCIWKLLYAGADVQK), and 232 to 261 (YWDTPLHAAAQQSSTEIVNLLIEFGADINA). In terms of domain architecture, SOCS box spans 278-329 (MVERILLQHEATPSSLCQLCRLCIRNYIGRPRLHLIPQLQLPTLLQNFLQYR).

The protein belongs to the ankyrin SOCS box (ASB) family. As to expression, expressed in endothelial and smooth muscle cells of collateral arteries as well as in satellite cells.

It functions in the pathway protein modification; protein ubiquitination. Its function is as follows. May be a substrate-recognition component of a SCF-like ECS (Elongin-Cullin-SOCS-box protein) E3 ubiquitin-protein ligase complex which mediates the ubiquitination and subsequent proteasomal degradation of target proteins. May play a role in the initiation of arteriogenesis. The sequence is that of Ankyrin repeat and SOCS box protein 5 (ASB5) from Oryctolagus cuniculus (Rabbit).